The following is a 107-amino-acid chain: MKLHFCSQAASSFPSPNPSNFLLPVASCLIPALKRLRTGYCPNITLGFSFQKLCIPDTSMCNFPSAPCTKPSERRCLLEFKARKGYKNRNGPKAEKRRPYVRAHAKW.

The disordered stretch occupies residues 87-107 (KNRNGPKAEKRRPYVRAHAKW).

This is an uncharacterized protein from Saccharomyces cerevisiae (strain ATCC 204508 / S288c) (Baker's yeast).